Consider the following 69-residue polypeptide: NAD(P)H-quinone oxidoreductase subunit O (69 aa).

This sequence belongs to the complex I NdhO subunit family. NDH-1 can be composed of about 15 different subunits; different subcomplexes with different compositions have been identified which probably have different functions.

The protein localises to the cellular thylakoid membrane. The enzyme catalyses a plastoquinone + NADH + (n+1) H(+)(in) = a plastoquinol + NAD(+) + n H(+)(out). It carries out the reaction a plastoquinone + NADPH + (n+1) H(+)(in) = a plastoquinol + NADP(+) + n H(+)(out). In terms of biological role, NDH-1 shuttles electrons from an unknown electron donor, via FMN and iron-sulfur (Fe-S) centers, to quinones in the respiratory and/or the photosynthetic chain. The immediate electron acceptor for the enzyme in this species is believed to be plastoquinone. Couples the redox reaction to proton translocation, and thus conserves the redox energy in a proton gradient. Cyanobacterial NDH-1 also plays a role in inorganic carbon-concentration. This chain is NAD(P)H-quinone oxidoreductase subunit O, found in Acaryochloris marina (strain MBIC 11017).